Reading from the N-terminus, the 551-residue chain is MSVSKARLQSVVRLSRTVPYSKTMVRSFHVSCAVKNSGNVPTPRNKSFFSRALEMAEVTSSLSMLGAVALFQSLRRLNNSSPKGKSGVPKKNIVVLGSGWGAVAAIKNLDPSLYNITLVSPRDHFLFTPMLPSCTVGTLRLPSITEPIVALFKGKIDPSNIHQAECTAIDTSAKKVTIRGTTEANEGKEAVIPYDTLVFAIGAGNQTFGIQGVRDHGCFLKEAGDAKKVFNRIFEILEQVRFNKDLSPEERARLLHITVVGGGPTGMEFAAEMQDFIDNDVKDMFPELQKDIHVTLIEAAPGVLPMFTKSLITYTENLFKNLNIKIMTKTVVKDVNEKNLIVQKTNPDGSKAMQEIPYGMLVWAAGITARPLTRTLMSSIPEQSGARKGLIVDEFFRVKGVPEMYAVGDCAFSGLPATAQVANQQGAWLAKNLNVEGKKFALHERIQALEKQLGEKEAPSQVAGLKQQVEQLKLEPFKYHHQGALAYVGDEKAIADLKLPFMKKMLPLQGIVGHTFWRLAYLNELISARSQFMVLIDWLKTRLFGRYDAKV.

Residues 1-35 constitute a mitochondrion transit peptide; the sequence is MSVSKARLQSVVRLSRTVPYSKTMVRSFHVSCAVK. 92–122 is a binding site for FAD; it reads NIVVLGSGWGAVAAIKNLDPSLYNITLVSPR. 255–291 lines the NAD(+) pocket; it reads LHITVVGGGPTGMEFAAEMQDFIDNDVKDMFPELQKD.

Belongs to the NADH dehydrogenase family.

Its subcellular location is the mitochondrion. The catalysed reaction is a quinone + NADH + H(+) = a quinol + NAD(+). It catalyses the reaction a ubiquinone + NADH + H(+) = a ubiquinol + NAD(+). Catalyzes the oxidation of NADH. The protein is Probable NADH-ubiquinone oxidoreductase C947.15c, mitochondrial of Schizosaccharomyces pombe (strain 972 / ATCC 24843) (Fission yeast).